The chain runs to 818 residues: Glycerol-3-phosphate acyltransferase (818 aa).

An HXXXXD motif motif is present at residues 305–310 (CHRSHM).

The protein belongs to the GPAT/DAPAT family.

Its subcellular location is the cell inner membrane. It carries out the reaction sn-glycerol 3-phosphate + an acyl-CoA = a 1-acyl-sn-glycero-3-phosphate + CoA. It functions in the pathway phospholipid metabolism; CDP-diacylglycerol biosynthesis; CDP-diacylglycerol from sn-glycerol 3-phosphate: step 1/3. This chain is Glycerol-3-phosphate acyltransferase, found in Edwardsiella ictaluri (strain 93-146).